Here is a 325-residue protein sequence, read N- to C-terminus: Interferon regulatory factor 1 (325 aa).

Positions 5-113 form a DNA-binding region, IRF tryptophan pentad repeat; sequence RMRMRPWLEM…SAVRVYRMLP (109 aa). Lysine 78 bears the N6-acetyllysine mark. The tract at residues 92–165 is disordered; the sequence is EEVKDQSRNK…TLPDDHSSYT (74 aa). Residues 141-157 are compositionally biased toward polar residues; the sequence is GDSSPDTFSDGLSSSTL. Residues lysine 275 and lysine 299 each participate in a glycyl lysine isopeptide (Lys-Gly) (interchain with G-Cter in SUMO) cross-link.

This sequence belongs to the IRF family. In terms of assembly, monomer. Homodimer. Interacts with EP300. Interacts with MYD88. Interacts with PIAS3. Interacts with SPOP. Phosphorylated by CK2 and this positively regulates its activity. Post-translationally, sumoylation represses the transcriptional activity and displays enhanced resistance to protein degradation. Sumoylated by UBE2I/UBC9 and SUMO1. Inactivates the tumor suppressor activity. Elevated levels in tumor cells. Major site is Lys-275. Sumoylation is enhanced by PIAS3. Desumoylated by SENP1 in tumor cells and appears to compete with ubiquitination on C-terminal sites. In terms of processing, ubiquitinated in a SPOP-depedent manner. Appears to compete with sumoylation on C-terminal sites.

The protein localises to the nucleus. It is found in the cytoplasm. Its activity is regulated as follows. Activated by MYD88. Transcriptional regulator which displays a remarkable functional diversity in the regulation of cellular responses. Regulates transcription of IFN and IFN-inducible genes, host response to viral and bacterial infections, regulation of many genes expressed during hematopoiesis, inflammation, immune responses and cell proliferation and differentiation, regulation of the cell cycle and induction of growth arrest and programmed cell death following DNA damage. Stimulates both innate and acquired immune responses through the activation of specific target genes and can act as a transcriptional activator and repressor regulating target genes by binding to an interferon-stimulated response element (ISRE) in their promoters. Has an essentail role in IFNG-dependent immunity to mycobacteria. Competes with the transcriptional repressor ZBED2 for binding to a common consensus sequence in gene promoters. Its target genes for transcriptional activation activity include: genes involved in anti-viral response, such as IFN-alpha/beta, RIGI, TNFSF10/TRAIL, ZBP1, OAS1/2, PIAS1/GBP, EIF2AK2/PKR and RSAD2/viperin; antibacterial response, such as GBP2, GBP5 and NOS2/INOS; anti-proliferative response, such as p53/TP53, LOX and CDKN1A; apoptosis, such as BBC3/PUMA, CASP1, CASP7 and CASP8; immune response, such as IL7, IL12A/B and IL15, PTGS2/COX2 and CYBB; DNA damage responses and DNA repair, such as POLQ/POLH; MHC class I expression, such as TAP1, PSMB9/LMP2, PSME1/PA28A, PSME2/PA28B and B2M and MHC class II expression, such as CIITA; metabolic enzymes, such as ACOD1/IRG1. Represses genes involved in anti-proliferative response, such as BIRC5/survivin, CCNB1, CCNE1, CDK1, CDK2 and CDK4 and in immune response, such as FOXP3, IL4, ANXA2 and TLR4. Stimulates p53/TP53-dependent transcription through enhanced recruitment of EP300 leading to increased acetylation of p53/TP53. Plays an important role in immune response directly affecting NK maturation and activity, macrophage production of IL12, Th1 development and maturation of CD8+ T-cells. Also implicated in the differentiation and maturation of dendritic cells and in the suppression of regulatory T (Treg) cells development. Acts as a tumor suppressor and plays a role not only in antagonism of tumor cell growth but also in stimulating an immune response against tumor cells. The chain is Interferon regulatory factor 1 (IRF1) from Homo sapiens (Human).